A 148-amino-acid polypeptide reads, in one-letter code: Nucleoside diphosphate kinase 1 (148 aa).

6 residues coordinate ATP: K9, F57, R85, T91, R102, and N112. The Pros-phosphohistidine intermediate role is filled by H115.

It belongs to the NDK family. Mg(2+) is required as a cofactor.

It carries out the reaction a 2'-deoxyribonucleoside 5'-diphosphate + ATP = a 2'-deoxyribonucleoside 5'-triphosphate + ADP. The enzyme catalyses a ribonucleoside 5'-diphosphate + ATP = a ribonucleoside 5'-triphosphate + ADP. Its function is as follows. Major role in the synthesis of nucleoside triphosphates other than ATP. The ATP gamma phosphate is transferred to the NDP beta phosphate via a ping-pong mechanism, using a phosphorylated active-site intermediate. The sequence is that of Nucleoside diphosphate kinase 1 from Nicotiana tabacum (Common tobacco).